The sequence spans 374 residues: Putative serine/threonine-protein kinase ZK507.3 (374 aa).

In terms of domain architecture, Protein kinase spans 25 to 296; sequence WKVIVELGKG…CKLTLKEPLV (272 aa). Residues 31–39 and lysine 60 contribute to the ATP site; that span reads LGKGGYGTV. Catalysis depends on aspartate 158, which acts as the Proton acceptor. The segment at 302–374 is disordered; that stretch reads NDNESGSTPT…KTRNKKPSRK (73 aa). Low complexity predominate over residues 306 to 324; sequence SGSTPTTSATACSPSSSTG. Residues 334–343 show a composition bias toward polar residues; that stretch reads IASNIDQKSI. Over residues 364–374 the composition is skewed to basic residues; it reads TKTRNKKPSRK.

The protein belongs to the protein kinase superfamily. Ser/Thr protein kinase family.

It catalyses the reaction L-seryl-[protein] + ATP = O-phospho-L-seryl-[protein] + ADP + H(+). It carries out the reaction L-threonyl-[protein] + ATP = O-phospho-L-threonyl-[protein] + ADP + H(+). This Caenorhabditis elegans protein is Putative serine/threonine-protein kinase ZK507.3.